The sequence spans 275 residues: MELWFTEKQTKHFGITARINRTLHTEQTEFQKLDMVETEEFGNMLILDGMVMTTEKDEFVYHEMVAHVPLFTHPNPENVLVVGGGDGGVIREVLKHPSVKKATLVEIDGKVIEYSKQYLPSIAGALDNERVEVKVGDGFLHIAESENEYDVIMVDSTEPVGPAVNLFTKGFYAGISKALKEDGIFVAQTDNPWFTPELITTVFKDVKEIFPITRLYTANIPTYPSGLWTFTIGSKKHDPLEVSEERFHEIETKYYTKELHNAAFALPKFVGDLIK.

A PABS domain is found at 2-235 (ELWFTEKQTK…GLWTFTIGSK (234 aa)). Residue Gln31 coordinates S-methyl-5'-thioadenosine. 2 residues coordinate spermidine: His62 and Asp86. S-methyl-5'-thioadenosine-binding positions include Glu106 and 137-138 (DG). Asp155 functions as the Proton acceptor in the catalytic mechanism. Residue 155 to 158 (DSTE) coordinates spermidine. S-methyl-5'-thioadenosine is bound at residue Pro162.

Belongs to the spermidine/spermine synthase family. Homodimer or homotetramer.

It localises to the cytoplasm. The enzyme catalyses S-adenosyl 3-(methylsulfanyl)propylamine + putrescine = S-methyl-5'-thioadenosine + spermidine + H(+). The protein operates within amine and polyamine biosynthesis; spermidine biosynthesis; spermidine from putrescine: step 1/1. Its function is as follows. Catalyzes the irreversible transfer of a propylamine group from the amino donor S-adenosylmethioninamine (decarboxy-AdoMet) to putrescine (1,4-diaminobutane) to yield spermidine. This is Polyamine aminopropyltransferase from Bacillus cereus (strain ATCC 10987 / NRS 248).